A 369-amino-acid polypeptide reads, in one-letter code: Superinfection exclusion protein (369 aa).

Positions 1 to 15 (MIALLILSLTCSVST) are cleaved as a signal peptide.

Belongs to the serpin family. Orthopoxvirus OPG040 subfamily. In terms of assembly, interacts with OPG185/A56 protein.

The protein resides in the virion membrane. It localises to the host cell membrane. In terms of biological role, negatively regulates superinfection and syncytium formation in infected host cells. Acts in concert with OPG185/A56 protein at the host cell membrane by interacting with and inhibiting the mature virion entry/fusion complex (EFC). This mechanism ensures that new virions released from the cell cannot enter already infected cells. The sequence is that of Superinfection exclusion protein (OPG040) from Vaccinia virus (strain Western Reserve) (VACV).